The chain runs to 259 residues: Acyl-[acyl-carrier-protein]--UDP-N-acetylglucosamine O-acyltransferase (259 aa).

The protein belongs to the transferase hexapeptide repeat family. LpxA subfamily. As to quaternary structure, homotrimer.

The protein localises to the cytoplasm. It catalyses the reaction a (3R)-hydroxyacyl-[ACP] + UDP-N-acetyl-alpha-D-glucosamine = a UDP-3-O-[(3R)-3-hydroxyacyl]-N-acetyl-alpha-D-glucosamine + holo-[ACP]. It participates in glycolipid biosynthesis; lipid IV(A) biosynthesis; lipid IV(A) from (3R)-3-hydroxytetradecanoyl-[acyl-carrier-protein] and UDP-N-acetyl-alpha-D-glucosamine: step 1/6. Functionally, involved in the biosynthesis of lipid A, a phosphorylated glycolipid that anchors the lipopolysaccharide to the outer membrane of the cell. This chain is Acyl-[acyl-carrier-protein]--UDP-N-acetylglucosamine O-acyltransferase, found in Nautilia profundicola (strain ATCC BAA-1463 / DSM 18972 / AmH).